Consider the following 239-residue polypeptide: Norbelladine 4'-O-methyltransferase 5 (239 aa).

S-adenosyl-L-methionine contacts are provided by residues V55, E77, 79–80, S85, D103, and A132; that span reads GV. Residue D155 participates in a divalent metal cation binding. Residue D157 coordinates S-adenosyl-L-methionine. A divalent metal cation is bound by residues D181 and N182.

This sequence belongs to the class I-like SAM-binding methyltransferase superfamily. Cation-dependent O-methyltransferase family. Requires Mg(2+) as cofactor.

The enzyme catalyses norbelladine + S-adenosyl-L-methionine = 4'-O-methylnorbelladine + S-adenosyl-L-homocysteine + H(+). Its pathway is alkaloid biosynthesis. 4'-O-methyltransferase converting norbelladine to 4'-O-methylnorbelladine. 4'-O-methylnorbelladine is a precursor to all Amaryllidaceae alkaloids such as galanthamine, lycorine and haemanthamine, and including haemanthamine- and crinamine-type alkaloids, promising anticancer agents. In Narcissus aff. pseudonarcissus MK-2014 (Daffodil), this protein is Norbelladine 4'-O-methyltransferase 5.